The primary structure comprises 247 residues: Zinc finger protein YPR015C (247 aa).

2 consecutive C2H2-type zinc fingers follow at residues 185 to 207 (KQCP…YLIH) and 213 to 237 (FKCT…LRTH).

The polypeptide is Zinc finger protein YPR015C (Saccharomyces cerevisiae (strain ATCC 204508 / S288c) (Baker's yeast)).